A 101-amino-acid polypeptide reads, in one-letter code: NAD(P)H-quinone oxidoreductase subunit 4L, chloroplastic (101 aa).

3 consecutive transmembrane segments (helical) span residues 2–22 (MLEH…YGLI), 32–52 (MCLE…SDLF), and 61–81 (IFSI…PAIV).

This sequence belongs to the complex I subunit 4L family. NDH is composed of at least 16 different subunits, 5 of which are encoded in the nucleus.

Its subcellular location is the plastid. The protein resides in the chloroplast thylakoid membrane. The enzyme catalyses a plastoquinone + NADH + (n+1) H(+)(in) = a plastoquinol + NAD(+) + n H(+)(out). It carries out the reaction a plastoquinone + NADPH + (n+1) H(+)(in) = a plastoquinol + NADP(+) + n H(+)(out). Its function is as follows. NDH shuttles electrons from NAD(P)H:plastoquinone, via FMN and iron-sulfur (Fe-S) centers, to quinones in the photosynthetic chain and possibly in a chloroplast respiratory chain. The immediate electron acceptor for the enzyme in this species is believed to be plastoquinone. Couples the redox reaction to proton translocation, and thus conserves the redox energy in a proton gradient. The polypeptide is NAD(P)H-quinone oxidoreductase subunit 4L, chloroplastic (Ceratophyllum demersum (Rigid hornwort)).